Consider the following 89-residue polypeptide: Small ribosomal subunit protein uS15 (89 aa).

Belongs to the universal ribosomal protein uS15 family. Part of the 30S ribosomal subunit. Forms a bridge to the 50S subunit in the 70S ribosome, contacting the 23S rRNA.

One of the primary rRNA binding proteins, it binds directly to 16S rRNA where it helps nucleate assembly of the platform of the 30S subunit by binding and bridging several RNA helices of the 16S rRNA. Functionally, forms an intersubunit bridge (bridge B4) with the 23S rRNA of the 50S subunit in the ribosome. This chain is Small ribosomal subunit protein uS15, found in Chelativorans sp. (strain BNC1).